An 87-amino-acid chain; its full sequence is Elongation factor Ts, chloroplastic (87 aa).

Belongs to the EF-Ts family.

It localises to the plastid. The protein resides in the chloroplast. Associates with the EF-Tu.GDP complex and induces the exchange of GDP to GTP. It remains bound to the aminoacyl-tRNA.EF-Tu.GTP complex up to the GTP hydrolysis stage on the ribosome. The chain is Elongation factor Ts, chloroplastic (tsf) from Antithamnion sp. (Red alga).